The sequence spans 309 residues: Ubiquitin-conjugating enzyme E2 32 (309 aa).

Positions 11-166 (PAVKRILQEV…ERQKIIDEIH (156 aa)) constitute a UBC core domain. Residue cysteine 93 is the Glycyl thioester intermediate of the active site. A helical transmembrane segment spans residues 275–295 (FTWAAVGLTIAIMVLLLKKFI).

The protein belongs to the ubiquitin-conjugating enzyme family.

The protein localises to the membrane. The enzyme catalyses S-ubiquitinyl-[E1 ubiquitin-activating enzyme]-L-cysteine + [E2 ubiquitin-conjugating enzyme]-L-cysteine = [E1 ubiquitin-activating enzyme]-L-cysteine + S-ubiquitinyl-[E2 ubiquitin-conjugating enzyme]-L-cysteine.. The protein operates within protein modification; protein ubiquitination. Accepts the ubiquitin from the E1 complex and catalyzes its covalent attachment to other proteins. This is Ubiquitin-conjugating enzyme E2 32 (UBC32) from Arabidopsis thaliana (Mouse-ear cress).